The chain runs to 230 residues: Heptaprenylglyceryl phosphate synthase (230 aa).

Lysine 12 provides a ligand contact to sn-glycerol 1-phosphate. The Mg(2+) site is built by aspartate 14 and threonine 40. Residues 159-164 (YIEYSG), glycine 189, and 209-210 (GD) contribute to the sn-glycerol 1-phosphate site.

The protein belongs to the GGGP/HepGP synthase family. Group I subfamily. Homodimer. Requires Mg(2+) as cofactor.

It carries out the reaction sn-glycerol 1-phosphate + all-trans-heptaprenyl diphosphate = 3-heptaprenyl-sn-glycero-1-phosphate + diphosphate. It functions in the pathway membrane lipid metabolism; glycerophospholipid metabolism. In terms of biological role, prenyltransferase that catalyzes in vivo the transfer of the heptaprenyl moiety of heptaprenyl pyrophosphate (HepPP; 35 carbon atoms) to the C3 hydroxyl of sn-glycerol-1-phosphate (G1P), producing heptaprenylglyceryl phosphate (HepGP). This reaction is an ether-bond-formation step in the biosynthesis of archaea-type G1P-based membrane lipids found in Bacillales. The polypeptide is Heptaprenylglyceryl phosphate synthase (Staphylococcus aureus (strain JH1)).